Consider the following 215-residue polypeptide: Large ribosomal subunit protein uL1 (215 aa).

This sequence belongs to the universal ribosomal protein uL1 family. Part of the 50S ribosomal subunit.

In terms of biological role, binds directly to 23S rRNA. Probably involved in E site tRNA release. Its function is as follows. Protein L1 is also a translational repressor protein, it controls the translation of its operon by binding to its mRNA. The sequence is that of Large ribosomal subunit protein uL1 from Staphylothermus marinus (strain ATCC 43588 / DSM 3639 / JCM 9404 / F1).